Here is a 53-residue protein sequence, read N- to C-terminus: MRNKEHNFPNQNNNKFEGEPRAKSEYASKRADGTTNTHPQERMRASGERSDFF.

Positions 1–53 are disordered; that stretch reads MRNKEHNFPNQNNNKFEGEPRAKSEYASKRADGTTNTHPQERMRASGERSDFF. Composition is skewed to basic and acidic residues over residues 16 to 32 and 39 to 53; these read FEGE…KRAD and PQER…SDFF.

This sequence belongs to the SspK family.

It is found in the spore core. In Geobacillus thermodenitrificans (strain NG80-2), this protein is Small, acid-soluble spore protein K.